The chain runs to 742 residues: Serine/threonine-protein kinase SKY1 (742 aa).

The segment at 13–146 is disordered; that stretch reads KSAHLADTST…KDYRPGGYHP (134 aa). Over residues 19–35 the composition is skewed to polar residues; sequence DTSTDASISCEEATSSQ. Positions 56-73 are enriched in low complexity; sequence TKSKLSLALQTSKSSSSA. The segment covering 81 to 101 has biased composition (basic and acidic residues); the sequence is TSSKTEDFSTKSIKKKPDSGV. The span at 106 to 127 shows a compositional bias: low complexity; that stretch reads SIQSDSGPQSDSDLDSDSSISS. Over residues 128–140 the composition is skewed to basic and acidic residues; it reads CDERNEESLKDYR. Positions 158-706 constitute a Protein kinase domain; sequence YILVRKLGWG…AGGLVNHPWL (549 aa). ATP-binding positions include 164-172 and K187; that span reads LGWGHFSTV. D294 acts as the Proton acceptor in catalysis. T383 and T386 each carry phosphothreonine. A phosphoserine mark is found at S388, S393, S410, S427, S432, S445, S449, and S453. The interval 459–491 is disordered; the sequence is INEDSNDNNNNDNSKNKNNNNNNSNNNNNEDIM. A compositionally biased stretch (low complexity) spans 465–489; the sequence is DNNNNDNSKNKNNNNNNSNNNNNED.

It belongs to the protein kinase superfamily. Ser/Thr protein kinase family.

The catalysed reaction is L-seryl-[protein] + ATP = O-phospho-L-seryl-[protein] + ADP + H(+). The enzyme catalyses L-threonyl-[protein] + ATP = O-phospho-L-threonyl-[protein] + ADP + H(+). Functionally, constitutively active kinase, specifically and sequentially phosphorylates serine/arginine (SR)-type shuttling mRNA binding proteins in their RS dipeptide repeats. The sequence is that of Serine/threonine-protein kinase SKY1 (SKY1) from Saccharomyces cerevisiae (strain ATCC 204508 / S288c) (Baker's yeast).